The following is a 298-amino-acid chain: Mitochondrial intermembrane space import and assembly protein 40 (298 aa).

Residues 1–33 (MYRTALRPSQSALRAIRSTTSPSALVSSGARRF) constitute a mitochondrion transit peptide. The Mitochondrial matrix portion of the chain corresponds to 34–52 (ASTTSAPKKKSTWKGAAVR). The helical; Signal-anchor for type II membrane protein transmembrane segment at 53–69 (WGLAVAAVYYYNTSPIF) threads the bilayer. At 70-298 (SDELPETAGT…TAANNNKKQQ (229 aa)) the chain is on the mitochondrial intermembrane side. The segment at 101 to 159 (RQAAEHAAARKAAQAAAKAAATPATPSESVEEQITKAEAEAEAVPEGDSKPRSESTEGV) is disordered. Over residues 110-121 (RKAAQAAAKAAA) the composition is skewed to low complexity. Disulfide bonds link cysteine 191–cysteine 193, cysteine 202–cysteine 235, and cysteine 212–cysteine 225. The CHCH domain maps to 199–243 (HGPCGEEFKAAFSCFVYSTEEPKGMDCIEKFSHMQDCFRKYPEVY). 2 short sequence motifs (cx9C motif) span residues 202–212 (CGEEFKAAFSC) and 225–235 (CIEKFSHMQDC). Residues 248 to 298 (ADDEEAERASAAAPAAEGTPAKEEPVENKKEEALEPATHDATAANNNKKQQ) form a disordered region. The segment covering 256–266 (ASAAAPAAEGT) has biased composition (low complexity). The segment covering 267 to 280 (PAKEEPVENKKEEA) has biased composition (basic and acidic residues).

As to quaternary structure, monomer. Requires Cu(2+) as cofactor. Zn(2+) is required as a cofactor.

It is found in the mitochondrion inner membrane. In terms of biological role, required for the import and folding of small cysteine-containing proteins (small Tim) in the mitochondrial intermembrane space (IMS). Forms a redox cycle with ERV1 that involves a disulfide relay system. Precursor proteins to be imported into the IMS are translocated in their reduced form into the mitochondria. The oxidized form of MIA40 forms a transient intermolecular disulfide bridge with the reduced precursor protein, resulting in oxidation of the precursor protein that now contains an intramolecular disulfide bond and is able to undergo folding in the IMS. The polypeptide is Mitochondrial intermembrane space import and assembly protein 40 (mia-40) (Neurospora crassa (strain ATCC 24698 / 74-OR23-1A / CBS 708.71 / DSM 1257 / FGSC 987)).